Reading from the N-terminus, the 250-residue chain is Probable transcriptional regulatory protein SYNPCC7002_A1640 (250 aa).

It belongs to the TACO1 family.

The protein resides in the cytoplasm. This Picosynechococcus sp. (strain ATCC 27264 / PCC 7002 / PR-6) (Agmenellum quadruplicatum) protein is Probable transcriptional regulatory protein SYNPCC7002_A1640.